The primary structure comprises 290 residues: PIH1 domain-containing protein 1 (290 aa).

Residues 34 to 50 (ELQQAQTSRPESTQIQP) are compositionally biased toward polar residues. The interval 34–53 (ELQQAQTSRPESTQIQPQPG) is disordered. At Ser173 the chain carries Phosphoserine.

The protein belongs to the PIH1 family. As to quaternary structure, component of the R2TP complex composed at least of RUVBL1, RUVBL2, RPAP3 and PIHD1. Component of the PAQosome complex which is responsible for the biogenesis of several protein complexes and which consists of R2TP complex members RUVBL1, RUVBL2, RPAP3 and PIH1D1, URI complex members PFDN2, PFDN6, PDRG1, UXT and URI1 as well as ASDURF, POLR2E and DNAAF10/WDR92. Interacts with phosphorylated TELO2 and mediates interaction of TELO2 with the R2TP complex. Interacts with phosphorylated ECD, EFTUD2/SNRP116, RPB1 and UBR5 and with RPB1 in a phosphorylation-independent manner. Interacts with the core C/D box snoRNP particle components NOP58 and FBL and with RUVBL1/TIP49. Interacts with RPAP3 and DNAAF10. Interacts with histone H4 and with SWI/SNF complex member SMARCB1/SNF5. Interacts with the mTORC1 complex member RPTOR. Interacts with MSL1.

Its subcellular location is the nucleus. Functionally, involved in the assembly of C/D box small nucleolar ribonucleoprotein (snoRNP) particles. Recruits the SWI/SNF complex to the core promoter of rRNA genes and enhances pre-rRNA transcription. Mediates interaction of TELO2 with the R2TP complex which is necessary for the stability of MTOR and SMG1. Positively regulates the assembly and activity of the mTORC1 complex. The sequence is that of PIH1 domain-containing protein 1 (PIH1D1) from Bos taurus (Bovine).